Here is a 196-residue protein sequence, read N- to C-terminus: Fe/S biogenesis protein NfuA (196 aa).

Residues C154 and C157 each coordinate [4Fe-4S] cluster.

The protein belongs to the NfuA family. As to quaternary structure, homodimer. Requires [4Fe-4S] cluster as cofactor.

Its function is as follows. Involved in iron-sulfur cluster biogenesis. Binds a 4Fe-4S cluster, can transfer this cluster to apoproteins, and thereby intervenes in the maturation of Fe/S proteins. Could also act as a scaffold/chaperone for damaged Fe/S proteins. This is Fe/S biogenesis protein NfuA from Blochmanniella pennsylvanica (strain BPEN).